A 91-amino-acid polypeptide reads, in one-letter code: Signal peptidase complex subunit 1 (91 aa).

The Cytoplasmic segment spans residues 1 to 28; it reads MEIFNDLSRKLVFPIDYPSQRRVAKLTD. The chain crosses the membrane as a helical span at residues 29–48; it reads IILGSGTLVSCLLGFYAGSL. The Lumenal segment spans residues 49–51; the sequence is SLT. The helical transmembrane segment at 52-71 threads the bilayer; that stretch reads LYAFAAAYGLALLLVVPAYG. At 72-91 the chain is on the cytoplasmic side; that stretch reads KYRQQKLAWVGSAAATTKDL.

Belongs to the SPCS1 family. As to quaternary structure, component of the signal peptidase complex (SPC) composed of a catalytic subunit SEC11 and three accessory subunits SPC1, SPC2 and SPC3. The complex induces a local thinning of the ER membrane which is used to measure the length of the signal peptide (SP) h-region of protein substrates. This ensures the selectivity of the complex towards h-regions shorter than 18-20 amino acids. SPC associates with the translocon complex.

It localises to the endoplasmic reticulum membrane. Its function is as follows. Component of the signal peptidase complex (SPC) which catalyzes the cleavage of N-terminal signal sequences from nascent proteins as they are translocated into the lumen of the endoplasmic reticulum. Dispensable for SPC enzymatic activity. The sequence is that of Signal peptidase complex subunit 1 (SPC1) from Eremothecium gossypii (strain ATCC 10895 / CBS 109.51 / FGSC 9923 / NRRL Y-1056) (Yeast).